The primary structure comprises 82 residues: Small ribosomal subunit protein bS16 (82 aa).

It belongs to the bacterial ribosomal protein bS16 family.

The chain is Small ribosomal subunit protein bS16 from Photorhabdus laumondii subsp. laumondii (strain DSM 15139 / CIP 105565 / TT01) (Photorhabdus luminescens subsp. laumondii).